Reading from the N-terminus, the 725-residue chain is MAMDSSLQARLFPGLAIKIQRSNGLIHSANVRTVNLEKSCVSVEWAEGGATKGKEIDFDDVAAINPELLQLLPLHPKDNLPLQENVTIQKQKRRSVNSKIPAPKESLRSRSTRMSTVSELRITAQENDMEVELPAAANSRKQFSVPPAPTRPSCPAVAEIPLRMVSEEMEEQVHSIRGSSSANPVNSVRRKSCLVKEVEKMKNKREEKKAQNSEMRMKRAQEYDSSFPNWEFARMIKEFRATLECHPLTMTDPIEEHRICVCVRKRPLNKQELAKKEIDVISIPSKCLLLVHEPKLKVDLTKYLENQAFCFDFAFDETASNEVVYRFTARPLVQTIFEGGKATCFAYGQTGSGKTHTMGGDLSGKAQNASKGIYAMASRDVFLLKNQPCYRKLGLEVYVTFFEIYNGKLFDLLNKKAKLRVLEDGKQQVQVVGLQEHLVNSADDVIKMIDMGSACRTSGQTFANSNSSRSHACFQIILRAKGRMHGKFSLVDLAGNERGADTSSADRQTRMEGAEINKSLLALKECIRALGQNKAHTPFRESKLTQVLRDSFIGENSRTCMIATISPGISSCEYTLNTLRYADRVKELSPHSGPSGEQLIQMETEEMEACSNGALIPGNLSKEEEELSSQMSSFNEAMTQIRELEEKAMEELKEIIQQGPDWLELSEMTEQPDYDLETFVNKAESALAQQAKHFSALRDVIKALRLAMQLEEQASRQISSKKRPQ.

Alanine 2 is subject to N-acetylalanine. The globular stretch occupies residues 2–254; the sequence is AMDSSLQARL…CHPLTMTDPI (253 aa). Phosphoserine occurs at positions 6 and 22. The tract at residues 89-116 is disordered; it reads QKQKRRSVNSKIPAPKESLRSRSTRMST. A Phosphoserine; by AURKB modification is found at serine 95. The Microtubule tip localization signal signature appears at 98–101; that stretch reads SKIP. Residues serine 106, serine 109, serine 111, serine 115, serine 166, serine 175, serine 187, and serine 192 each carry the phosphoserine modification. The tract at residues 207-238 is negative regulator of microtubule-binding; the sequence is EKKAQNSEMRMKRAQEYDSSFPNWEFARMIKE. The Kinesin motor domain maps to 258–588; sequence RICVCVRKRP…LRYADRVKEL (331 aa). Residues arginine 264 and 348–355 contribute to the ATP site; that span reads GQTGSGKT. Residues 415–418 carry the Nuclear localization signal motif; the sequence is KKAK. Phosphoserine is present on residues serine 519, serine 621, and serine 633. Positions 618 to 658 form a coiled coil; that stretch reads GNLSKEEEELSSQMSSFNEAMTQIRELEEKAMEELKEIIQQ.

The protein belongs to the TRAFAC class myosin-kinesin ATPase superfamily. Kinesin family. MCAK/KIF2 subfamily. In terms of assembly, interacts with CENPH. Interacts with MTUS2/TIP150; the interaction is direct. Interacts with MAPRE1; the interaction is direct, regulated by phosphorylation and is probably required for targeting to growing microtubule plus ends. Interacts with KIF18B at microtubule tips; this interaction increases the affinity of both partners for microtubule plus ends and is required for robust microtubule depolymerization. Phosphorylation by AURKA or AURKB strongly reduces KIF18B-binding. Phosphorylation by AURKB, regulates association with centromeres and kinetochores and the microtubule depolymerization activity. In terms of processing, ubiquitinated. As to expression, expressed at high levels in thymus and testis, at low levels in small intestine, the mucosal lining of colon, and placenta, and at very low levels in spleen and ovary; expression is not detected in prostate, peripheral blood Leukocytes, heart, brain, lung, liver, skeletal muscle, kidney or pancreas. Isoform 2 is testis-specific.

The protein resides in the cytoplasm. It localises to the cytoskeleton. The protein localises to the nucleus. It is found in the chromosome. Its subcellular location is the centromere. The protein resides in the kinetochore. In complex with KIF18B, constitutes the major microtubule plus-end depolymerizing activity in mitotic cells. Regulates the turnover of microtubules at the kinetochore and functions in chromosome segregation during mitosis. Plays a role in chromosome congression and is required for the lateral to end-on conversion of the chromosome-microtubule attachment. This is Kinesin-like protein KIF2C (KIF2C) from Homo sapiens (Human).